The primary structure comprises 824 residues: DNA replication helicase (824 aa).

90–97 (GTAGAGKT) contacts ATP.

It belongs to the herpesviridae helicase family. As to quaternary structure, associates with the primase and the primase-associated factor to form the helicase-primase complex.

It is found in the host nucleus. Component of the helicase/primase complex. Unwinds the DNA at the replication forks and generates single-stranded DNA for both leading and lagging strand synthesis. The primase synthesizes short RNA primers on the lagging strand that the polymerase elongates using dNTPs. Possesses helicase-like motifs and therefore may act as the helicase subunit of the complex. This chain is DNA replication helicase, found in Human herpesvirus 6A (strain Uganda-1102) (HHV-6 variant A).